The primary structure comprises 541 residues: Tripeptidyl aminopeptidase (541 aa).

Residues 1–36 (MRKSSIRRRATAFGTAGALVTATLIAGAVSAPAASA) form the signal peptide. Positions 37–39 (APA) are excised as a propeptide. An AB hydrolase-1 domain is found at 123-501 (GALIYNPGGP…SRLITERDAG (379 aa)). Catalysis depends on S249, which acts as the Nucleophile. D474 is a catalytic residue. H503 serves as the catalytic Proton donor.

The protein belongs to the peptidase S33 family.

The protein localises to the secreted. Its function is as follows. Cleaves tripeptides from the N-termini of proteins. Does not cleave mono- or dipeptides, or N-terminally blocked peptides. The sequence is that of Tripeptidyl aminopeptidase from Streptomyces coelicolor (strain ATCC BAA-471 / A3(2) / M145).